Consider the following 147-residue polypeptide: Myoglobin (147 aa).

A Globin domain is found at 2–141 (ADFDAVLKCW…IIADLEANYK (140 aa)). A nitrite-binding site is contributed by His60. His60 is a binding site for O2. His89 is a binding site for heme b.

The protein belongs to the globin family. In terms of assembly, monomeric.

Its subcellular location is the cytoplasm. The protein resides in the sarcoplasm. It catalyses the reaction Fe(III)-heme b-[protein] + nitric oxide + H2O = Fe(II)-heme b-[protein] + nitrite + 2 H(+). The catalysed reaction is H2O2 + AH2 = A + 2 H2O. Its function is as follows. Monomeric heme protein which primary function is to store oxygen and facilitate its diffusion within muscle tissues. Reversibly binds oxygen through a pentacoordinated heme iron and enables its timely and efficient release as needed during periods of heightened demand. Depending on the oxidative conditions of tissues and cells, and in addition to its ability to bind oxygen, it also has a nitrite reductase activity whereby it regulates the production of bioactive nitric oxide. Under stress conditions, like hypoxia and anoxia, it also protects cells against reactive oxygen species thanks to its pseudoperoxidase activity. This is Myoglobin (mb) from Thunnus alalunga (Albacore).